The chain runs to 88 residues: Large ribosomal subunit protein bL31B (88 aa).

This sequence belongs to the bacterial ribosomal protein bL31 family. Type B subfamily. Part of the 50S ribosomal subunit.

This Nocardia farcinica (strain IFM 10152) protein is Large ribosomal subunit protein bL31B.